We begin with the raw amino-acid sequence, 301 residues long: Ribosomal protein L11 methyltransferase (301 aa).

4 residues coordinate S-adenosyl-L-methionine: threonine 146, glycine 167, aspartate 189, and asparagine 234.

The protein belongs to the methyltransferase superfamily. PrmA family.

It is found in the cytoplasm. The enzyme catalyses L-lysyl-[protein] + 3 S-adenosyl-L-methionine = N(6),N(6),N(6)-trimethyl-L-lysyl-[protein] + 3 S-adenosyl-L-homocysteine + 3 H(+). Methylates ribosomal protein L11. This chain is Ribosomal protein L11 methyltransferase, found in Acinetobacter baumannii (strain SDF).